Consider the following 317-residue polypeptide: Putative 2-hydroxyacid dehydrogenase SA2098 (317 aa).

NAD(+) contacts are provided by residues 155–156 (EI), 234–236 (ASR), and Asp260. The active site involves Arg236. Glu265 is an active-site residue. His283 functions as the Proton donor in the catalytic mechanism. Position 283 to 286 (283 to 286 (HIGN)) interacts with NAD(+).

Belongs to the D-isomer specific 2-hydroxyacid dehydrogenase family.

This chain is Putative 2-hydroxyacid dehydrogenase SA2098, found in Staphylococcus aureus (strain N315).